A 379-amino-acid chain; its full sequence is Cytokine receptor common subunit gamma (379 aa).

Residues 1 to 22 form the signal peptide; sequence MLKPPLPLRSLLFLQLPLLGVG. At 23–269 the chain is on the extracellular side; sequence LNPKFLTPSG…ENIENPENPS (247 aa). Cys68 and Cys78 are disulfide-bonded. 3 N-linked (GlcNAc...) asparagine glycosylation sites follow: Asn77, Asn81, and Asn90. The cysteines at positions 109 and 122 are disulfide-linked. The region spanning 163–260 is the Fibronectin type-III domain; it reads APENLTLRNL…IHWGSNTSKE (98 aa). 2 N-linked (GlcNAc...) asparagine glycosylation sites follow: Asn166 and Asn171. Positions 244–248 match the WSXWS motif motif; the sequence is WSDWS. A helical membrane pass occupies residues 270–290; it reads LFALEAVLIPLGSMGLIVSLI. The Cytoplasmic portion of the chain corresponds to 291-379; the sequence is CVYCWLERTM…PPCYTLKPEP (89 aa). The Box 1 motif signature appears at 299–307; sequence TMPRIPTLK. Thr305 is modified (phosphothreonine). A disordered region spans residues 349–370; that stretch reads PPKGGEGPGGSPCSQHSPYWAP.

This sequence belongs to the type I cytokine receptor family. Type 5 subfamily. In terms of assembly, the gamma subunit is common to the IL2, IL4, IL7, IL15, IL21 and probably also the IL13 receptors. Interacts with SHB upon interleukin stimulation.

It localises to the cell membrane. Its subcellular location is the cell surface. Functionally, common subunit for the receptors for a variety of interleukins. Probably in association with IL15RA, involved in the stimulation of neutrophil phagocytosis by IL15. This is Cytokine receptor common subunit gamma (IL2RG) from Bos taurus (Bovine).